The primary structure comprises 244 residues: Protein crossbronx (244 aa).

A UBC core domain is found at 20-176 (QQEYKILAEY…VQKNIKESKE (157 aa)). Residues 209 to 244 (AGRSKQTEPSAQQANGGHATGLSWVKEGEFKPLSIE) are disordered.

Belongs to the ubiquitin-conjugating enzyme family. FTS subfamily.

In Drosophila erecta (Fruit fly), this protein is Protein crossbronx (cbx).